Consider the following 553-residue polypeptide: CDP-diacylglycerol--glycerol-3-phosphate 3-phosphatidyltransferase, mitochondrial (553 aa).

The N-terminal 25 residues, 1–25, are a transit peptide targeting the mitochondrion; the sequence is MAAPAAGPVFWRRLLGLLPGRPGLA. S46 is modified (phosphoserine). ATP is bound at residue 121-128; sequence ASLYLGTG. 2 PLD phosphodiesterase domains span residues 212–238 and 457–490; these read TIGL…SDSY and TGWT…GYRS. Catalysis depends on residues H217, K219, and D224.

The protein belongs to the CDP-alcohol phosphatidyltransferase class-II family.

The protein resides in the mitochondrion. It carries out the reaction a CDP-1,2-diacyl-sn-glycerol + sn-glycerol 3-phosphate = a 1,2-diacyl-sn-glycero-3-phospho-(1'-sn-glycero-3'-phosphate) + CMP + H(+). The protein operates within phospholipid metabolism; phosphatidylglycerol biosynthesis; phosphatidylglycerol from CDP-diacylglycerol: step 1/2. Activated by calcium and magnesium and inhibited by other bivalent cations. Functions in the biosynthesis of the anionic phospholipids phosphatidylglycerol and cardiolipin. This chain is CDP-diacylglycerol--glycerol-3-phosphate 3-phosphatidyltransferase, mitochondrial (PGS1), found in Cricetulus griseus (Chinese hamster).